The primary structure comprises 126 residues: Small ribosomal subunit protein uS11 (126 aa).

Belongs to the universal ribosomal protein uS11 family. As to quaternary structure, part of the 30S ribosomal subunit. Interacts with proteins S7 and S18. Binds to IF-3.

Functionally, located on the platform of the 30S subunit, it bridges several disparate RNA helices of the 16S rRNA. Forms part of the Shine-Dalgarno cleft in the 70S ribosome. In Ehrlichia chaffeensis (strain ATCC CRL-10679 / Arkansas), this protein is Small ribosomal subunit protein uS11.